A 162-amino-acid polypeptide reads, in one-letter code: Shikimate kinase (162 aa).

Residue 11-16 (GSGKSS) coordinates ATP. Position 15 (S15) interacts with Mg(2+). Substrate contacts are provided by D33, R57, and G80. R116 serves as a coordination point for ATP. Residue R132 coordinates substrate.

This sequence belongs to the shikimate kinase family. Monomer. Mg(2+) serves as cofactor.

It localises to the cytoplasm. It carries out the reaction shikimate + ATP = 3-phosphoshikimate + ADP + H(+). The protein operates within metabolic intermediate biosynthesis; chorismate biosynthesis; chorismate from D-erythrose 4-phosphate and phosphoenolpyruvate: step 5/7. Its function is as follows. Catalyzes the specific phosphorylation of the 3-hydroxyl group of shikimic acid using ATP as a cosubstrate. The sequence is that of Shikimate kinase from Helicobacter pylori (strain HPAG1).